The chain runs to 399 residues: Brefeldin A resistance protein (399 aa).

Composition is skewed to basic and acidic residues over residues 1–31 (MTSK…DETS), 49–69 (SKSE…KETT), and 101–130 (KVEE…KESA). Disordered regions lie at residues 1 to 173 (MTSK…FGAF) and 191 to 269 (KKFA…SEII). The segment covering 138–157 (SPFSQFASFSNASSPFSNVS) has biased composition (low complexity). Composition is skewed to basic and acidic residues over residues 205 to 217 (SGKE…KSSE) and 241 to 252 (TKSEPKEADKGS). A compositionally biased stretch (polar residues) spans 253–263 (GDSTKSTMHQL). The region spanning 256–396 (TKSTMHQLSD…VLEAIPKGGR (141 aa)) is the RanBD1 domain.

Post-translationally, phosphorylated.

The protein resides in the nucleus. The polypeptide is Brefeldin A resistance protein (hba1) (Schizosaccharomyces pombe (strain 972 / ATCC 24843) (Fission yeast)).